A 95-amino-acid chain; its full sequence is uncharacterized protein (95 aa).

An N-terminal signal peptide occupies residues 1–21 (MKVLSISLIFFALLLTGCSQV).

This is an uncharacterized protein from Archaeoglobus fulgidus (strain ATCC 49558 / DSM 4304 / JCM 9628 / NBRC 100126 / VC-16).